Reading from the N-terminus, the 600-residue chain is Forkhead box protein O (600 aa).

A Phosphothreonine; by PKB/AKT1 modification is found at threonine 49. Serine 80 bears the Phosphoserine mark. The fork-head DNA-binding region spans 100–206; it reads WGNLSYADLI…ETSRYEKRRG (107 aa). Disordered regions lie at residues 187–210, 222–283, 319–364, and 580–600; these read KSVR…RAKK, GLND…LEPD, QQGF…TPGY, and LNAR…SWVH. The residue at position 195 (serine 195) is a Phosphoserine; by PKB/AKT1. Composition is skewed to polar residues over residues 226–235 and 261–270; these read ATPSPSSSVS and RASSNASSCG. Serine 264 is modified (phosphoserine; by PKB/AKT1). A phosphoserine mark is found at serine 267, serine 268, and serine 273. The segment covering 330–342 has biased composition (pro residues); the sequence is TQPPPPPYQPPQP. Low complexity predominate over residues 343–354; the sequence is QQQQQQGQQPSP.

Interacts with melt.

It is found in the cytoplasm. Its subcellular location is the nucleus. Its function is as follows. Transcription factor involved in the regulation of the insulin signaling pathway. Consistently activates both the downstream target Thor\d4EBP and the feedback control target InR. Involved in negative regulation of the cell cycle, modulating cell growth and proliferation. In response to cellular stresses, such as nutrient deprivation or increased levels of reactive oxygen species, foxo is activated and inhibits growth through the action of target genes such as Thor. Foxo activated in the adult fat body can regulate lifespan in adults; an insulin peptide itself may function as one secondary messenger of insulin-regulated aging. Also regulates Lip4, homolog of human acid lipases, thereby acting as a key modulator of lipid metabolism by insulin signaling and integrates insulin responses to glucose and lipid homeostasis. The chain is Forkhead box protein O from Drosophila ananassae (Fruit fly).